A 648-amino-acid chain; its full sequence is MFYNNPLLIKLKNKLYKKKKIEGIVKSTTKGFGFLEVDSKKTYFIPSKNMKKVIHGDRIIGLIKLENNKEIVYPKILIEPFLKKFIGSILKKNNIIYIQANYPYIKDLIFYRYKTSVFRSWKNGDWVIAELDTHSLRDNNHFSINILKFISEKNDPLTPWNVILSKYNLEKKSPKINFNYILNNNNLKDKRIDLTYLDFITIDNSNTQDIDDALFVKKTKKNKLTLIVAIADPTEYILINTKVDDIAKKRVFTNYLPGFNISMLPKEFSEDLCSLKPHVKRPVLACKIIIDNEGKILMKKTKFFLAWIESKGKLSYQNVSNWLEKLGNWQPDNKKIKKQILLLYKMYKIRNMWRKKNALIFPDNIEYKFHLSKTWEILNISVEKRSIAHKIVEESMISANICAASFLKKKLGFGLYNSHSGFDTFNAKNAINFLKKYNIIFTLEEIMTLSGFCKLKRKLNKLSNKYINYRIQKFQSFGEISLIPKPHFSLGLPYYATWTSPIRKYSDMINHRLIKSIIIGKKKISPPDTNIIPQIIHRKYKIRMALKEIEEWLYFKYYNKKKSDKKKYQANIIDISKGGIKARLLKTGAYIFIPVTYIHKIRHELNLNSEKGIIYIKNKIYYKVSDIIIVSLLKINNGNKKIIATMIN.

Positions 191 to 518 (RIDLTYLDFI…INHRLIKSII (328 aa)) constitute an RNB domain. Residues 565-647 (KKKYQANIID…GNKKIIATMI (83 aa)) enclose the S1 motif domain.

It belongs to the RNR ribonuclease family. RNase II subfamily.

It localises to the cytoplasm. It carries out the reaction Exonucleolytic cleavage in the 3'- to 5'-direction to yield nucleoside 5'-phosphates.. Functionally, involved in mRNA degradation. Hydrolyzes single-stranded polyribonucleotides processively in the 3' to 5' direction. In Buchnera aphidicola subsp. Cinara cedri (strain Cc), this protein is Exoribonuclease 2.